A 156-amino-acid chain; its full sequence is Ribosomal RNA large subunit methyltransferase H (156 aa).

S-adenosyl-L-methionine-binding positions include L73, G104, and L123 to L128.

Belongs to the RNA methyltransferase RlmH family. Homodimer.

The protein resides in the cytoplasm. The catalysed reaction is pseudouridine(1915) in 23S rRNA + S-adenosyl-L-methionine = N(3)-methylpseudouridine(1915) in 23S rRNA + S-adenosyl-L-homocysteine + H(+). Its function is as follows. Specifically methylates the pseudouridine at position 1915 (m3Psi1915) in 23S rRNA. This chain is Ribosomal RNA large subunit methyltransferase H, found in Hahella chejuensis (strain KCTC 2396).